Here is a 153-residue protein sequence, read N- to C-terminus: Aspartate carbamoyltransferase regulatory chain (153 aa).

Cys109, Cys114, Cys138, and Cys141 together coordinate Zn(2+).

This sequence belongs to the PyrI family. In terms of assembly, contains catalytic and regulatory chains. Requires Zn(2+) as cofactor.

Involved in allosteric regulation of aspartate carbamoyltransferase. In Wigglesworthia glossinidia brevipalpis, this protein is Aspartate carbamoyltransferase regulatory chain.